A 79-amino-acid polypeptide reads, in one-letter code: Large ribosomal subunit protein eL38 (79 aa).

Belongs to the eukaryotic ribosomal protein eL38 family.

In Theileria parva (East coast fever infection agent), this protein is Large ribosomal subunit protein eL38 (RPL38).